The following is a 1128-amino-acid chain: MIAVSFKCRCQILRRLTKDESPYTKSASQTKPPDGALAVRRQSIPEEFKGSTVVELMKKEGTTLGLTVSGGIDKDGKPRVSNLRQGGIAARSDQLDVGDYIKAVNGINLAKFRHDEIISLLKNVGERVVLEVEYELPPVSVQGSSVIFRTVEVTLHKEGNTFGFVIRGGAHDDRNKSRPVVITCVRPGGPADREGTIKPGDRLLSVDGIRLLGTTHAEAMSILKQCGQEAALLIEYDVSVMDSVATASGPLLVEVAKTPGASLGVALTTSMCCNKQVIVIDKIKSASIADRCGALHVGDHILSIDGTSMEYCTLAEATQFLANTTDQVKLEILPHHQTRLALKGPDHVKIQRSDRQLTWDSWASNHSSLHTNHHYNTYHPDHCRVPALTFPKAPPPNSPPALVSSSFSPTSMSAYSLSSLNMGTLPRSLYSTSPRGTMMRRRLKKKDFKSSLSLASSTVGLAGQVVHTETTEVVLTADPVTGFGIQLQGSVFATETLSSPPLISYIEADSPAERCGVLQIGDRVMAINGIPTEDSTFEEASQLLRDSSITSKVTLEIEFDVAESVIPSSGTFHVKLPKKHNVELGITISSPSSRKPGDPLVISDIKKGSVAHRTGTLELGDKLLAIDNIRLDNCSMEDAVQILQQCEDLVKLKIRKDEDNSDEQESSGAIIYTVELKRYGGPLGITISGTEEPFDPIIISSLTKGGLAERTGAIHIGDRILAINSSSLKGKPLSEAIHLLQMAGETVTLKIKKQTDAQSASSPKKFPISSHLSDLGDVEEDSSPAQKPGKLSDMYPSTVPSVDSAVDSWDGSAIDTSYGTQGTSFQASGYNFNTYDWRSPKQRGSLSPVTKPRSQTYPDVGLSYEDWDRSTASGFAGAADSAETEQEENFWSQALEDLETCGQSGILRELEEKADRRVSLRNMTLLATIMSGSTMSLNHEAPTPRSQLGRQASFQERSSSRPHYSQTTRSNTLPSDVGRKSVTLRKMKQEIKEIMSPTPVELHKVTLYKDSDMEDFGFSVADGLLEKGVYVKNIRPAGPGDLGGLKPYDRLLQVNHVRTRDFDCCLVVPLIAESGNKLDLVISRNPLASQKSIDQQSLPGDWSEQNSAFFQQPSHGGNLETREPTNTL.

S43 bears the Phosphoserine mark. PDZ domains follow at residues 53–136, 150–238, 252–336, 472–561, 573–658, and 673–755; these read VVEL…EYEL, TVEV…EYDV, LVEV…LPHH, EVVL…EFDV, HVKL…RKDE, and TVEL…KKQT. 2 disordered regions span residues 754–798 and 935–981; these read QTDA…YPST and MSLN…GRKS. Over residues 944 to 974 the composition is skewed to polar residues; it reads PRSQLGRQASFQERSSSRPHYSQTTRSNTLP. Positions 1004–1086 constitute a PDZ 7 domain; that stretch reads KVTLYKDSDM…KLDLVISRNP (83 aa). Positions 1093–1115 are enriched in polar residues; it reads IDQQSLPGDWSEQNSAFFQQPSH. The tract at residues 1093-1128 is disordered; the sequence is IDQQSLPGDWSEQNSAFFQQPSHGGNLETREPTNTL.

As to quaternary structure, interacts with EPHA7, EPHB2, KIF5A, KIF5B, KIF5C, GRIA2, GRIA3, GRIPAP1/GRASP1, PPFIA1, PPFIA4, FRAS1, PLCD4, PTPRF and liprins-alpha. Can form homomultimers or heteromultimers with GRIP2. Forms a ternary complex with GRIA2 and CSPG4. Interacts with ATAD1 in an ATP-dependent manner. ATAD1-catalyzed ATP hydrolysis disrupts binding to ATAD1 and to GRIA2 and leads to AMPAR complex disassembly. Interacts with EFNB1, EFNB3 and the C-terminal tail of PRLHR. Interacts with SLC30A9. Interacts with BUD23. Forms a complex with NSG1, GRIA2 and STX12; controls the intracellular fate of AMPAR and the endosomal sorting of the GRIA2 subunit toward recycling and membrane targeting. Interacts with NSG1.

Its subcellular location is the cytoplasmic vesicle. The protein resides in the perikaryon. It is found in the cell projection. The protein localises to the dendrite. It localises to the cytoplasm. Its subcellular location is the endomembrane system. The protein resides in the postsynaptic cell membrane. It is found in the postsynaptic density. The protein localises to the endoplasmic reticulum membrane. Functionally, may play a role as a localized scaffold for the assembly of a multiprotein signaling complex and as mediator of the trafficking of its binding partners at specific subcellular location in neurons. Through complex formation with NSG1, GRIA2 and STX12 controls the intracellular fate of AMPAR and the endosomal sorting of the GRIA2 subunit toward recycling and membrane targeting. The chain is Glutamate receptor-interacting protein 1 (GRIP1) from Homo sapiens (Human).